The primary structure comprises 462 residues: Myo-inositol transporter 3B (462 aa).

A run of 10 helical transmembrane segments spans residues 1–21 (MAIL…ASSY), 31–51 (IILG…ITET), 61–81 (IGVN…IGAG), 91–111 (LLFA…HYLP), 194–214 (LCGF…LGLS), 218–238 (LGGL…MSLV), 245–265 (GLML…IIGF), 289–309 (VVIG…SHLV), 324–344 (GSGV…VSYL), and 354–374 (GTYG…VFCF).

It belongs to the major facilitator superfamily. Sugar transporter (TC 2.A.1.1) family.

Its subcellular location is the cell membrane. It carries out the reaction myo-inositol(out) + H(+)(out) = myo-inositol(in) + H(+)(in). Transporter for myo-inositol. In Cryptococcus neoformans var. grubii serotype A (strain H99 / ATCC 208821 / CBS 10515 / FGSC 9487) (Filobasidiella neoformans var. grubii), this protein is Myo-inositol transporter 3B.